Reading from the N-terminus, the 101-residue chain is Small ribosomal subunit protein uS14 (101 aa).

Residues 1–10 (MAKKSSIEKN) show a composition bias toward basic and acidic residues. The segment at 1–23 (MAKKSSIEKNNRRKRMTGNAAAK) is disordered.

This sequence belongs to the universal ribosomal protein uS14 family. Part of the 30S ribosomal subunit. Contacts proteins S3 and S10.

Functionally, binds 16S rRNA, required for the assembly of 30S particles and may also be responsible for determining the conformation of the 16S rRNA at the A site. The polypeptide is Small ribosomal subunit protein uS14 (Nitrobacter hamburgensis (strain DSM 10229 / NCIMB 13809 / X14)).